The sequence spans 165 residues: Large ribosomal subunit protein uL10 (165 aa).

This sequence belongs to the universal ribosomal protein uL10 family. As to quaternary structure, part of the ribosomal stalk of the 50S ribosomal subunit. The N-terminus interacts with L11 and the large rRNA to form the base of the stalk. The C-terminus forms an elongated spine to which L12 dimers bind in a sequential fashion forming a multimeric L10(L12)X complex.

Functionally, forms part of the ribosomal stalk, playing a central role in the interaction of the ribosome with GTP-bound translation factors. This is Large ribosomal subunit protein uL10 from Edwardsiella ictaluri (strain 93-146).